A 362-amino-acid chain; its full sequence is tRNA 2-selenouridine synthase (362 aa).

The Rhodanese domain occupies 14–137; it reads LANETPIIDV…LRQATIEMTN (124 aa). C97 serves as the catalytic S-selanylcysteine intermediate.

The protein belongs to the SelU family. In terms of assembly, monomer.

It carries out the reaction 5-methylaminomethyl-2-thiouridine(34) in tRNA + selenophosphate + (2E)-geranyl diphosphate + H2O + H(+) = 5-methylaminomethyl-2-selenouridine(34) in tRNA + (2E)-thiogeraniol + phosphate + diphosphate. The catalysed reaction is 5-methylaminomethyl-2-thiouridine(34) in tRNA + (2E)-geranyl diphosphate = 5-methylaminomethyl-S-(2E)-geranyl-thiouridine(34) in tRNA + diphosphate. The enzyme catalyses 5-methylaminomethyl-S-(2E)-geranyl-thiouridine(34) in tRNA + selenophosphate + H(+) = 5-methylaminomethyl-2-(Se-phospho)selenouridine(34) in tRNA + (2E)-thiogeraniol. It catalyses the reaction 5-methylaminomethyl-2-(Se-phospho)selenouridine(34) in tRNA + H2O = 5-methylaminomethyl-2-selenouridine(34) in tRNA + phosphate. Functionally, involved in the post-transcriptional modification of the uridine at the wobble position (U34) of tRNA(Lys), tRNA(Glu) and tRNA(Gln). Catalyzes the conversion of 2-thiouridine (S2U-RNA) to 2-selenouridine (Se2U-RNA). Acts in a two-step process involving geranylation of 2-thiouridine (S2U) to S-geranyl-2-thiouridine (geS2U) and subsequent selenation of the latter derivative to 2-selenouridine (Se2U) in the tRNA chain. This Proteus mirabilis (strain HI4320) protein is tRNA 2-selenouridine synthase.